A 455-amino-acid chain; its full sequence is Nuclear receptor subfamily 6 group A member 1-B (455 aa).

Residues 38 to 113 (ERWCLICGDR…MGMNRKAIRE (76 aa)) constitute a DNA-binding region (nuclear receptor). 2 NR C4-type zinc fingers span residues 41-61 (CLIC…CEGC) and 77-96 (CNRD…CQYC). The segment at 145-173 (EGSDLSDSWSHGYSNHSSPGNSLSEGGQS) is disordered. The span at 149–165 (LSDSWSHGYSNHSSPGN) shows a compositional bias: polar residues. The NR LBD domain maps to 215 to 446 (QTHTLTGQIL…YSCTTNQNPW (232 aa)).

The protein belongs to the nuclear hormone receptor family. NR6 subfamily. As to quaternary structure, homodimer.

Its subcellular location is the nucleus. Probable orphan nuclear receptor. Binds to a response element containing repeats of the motif 5'-AGGTCA-3'. This Danio rerio (Zebrafish) protein is Nuclear receptor subfamily 6 group A member 1-B.